The following is a 302-amino-acid chain: Hydra actinoporin-like toxin 4 (302 aa).

Positions 1–17 (MLLFKLIVCFFFIFAIG) are cleaved as a signal peptide. The segment at 22-93 (KKDETSGENE…PAPKQTTTKK (72 aa)) is disordered. Positions 60–75 (KPPAAKPPAASKITKP) are enriched in low complexity. The span at 76 to 86 (QVPPQKKPPAP) shows a compositional bias: pro residues. A Cell attachment site motif is present at residues 274–276 (KAG).

The protein belongs to the actinoporin family. HALT subfamily. In terms of assembly, octamer or nonamer in membranes. Monomer in the soluble state. In vitro, interacts with folate receptor alpha (of target organism).

It is found in the nematocyst. The protein resides in the secreted. The protein localises to the target cell membrane. Functionally, pore-forming protein that forms hydrophilic pores and causes cytolysis. Compared to equinatoxin-2 (AC P61914), it reveals lower cytolysis activity (5-12-fold difference, tested on erythrocytes), a larger pore size (probably 2-3 nm) and different affinity to membrane lipids (100-fold lower affinity to sphingomyelin). Binds to sulfatides. Shows cytolytic activity on HeLa cells, with a different potency than its paralogs (from most potent to less potent: HALT-4&gt;HALT-6~HALT-1&gt;HALT-3&gt;HALT-7&gt;HALT-2). This recombinant protein has the highest cytolytic activity compared to other rHALT proteins, probably due to its longer N-terminal sequence that may penetrate the lipid bilayer more effectively. Pore formation is a multi-step process that involves specific recognition of membrane lipid by a protein aromatic residues rich region, firm binding to the membrane (mainly driven by hydrophobic interactions) accompanied by the transfer of the N-terminal region to the lipid-water interface and finally pore formation after oligomerization of monomers. In vitro, binds to the folate receptor alpha (FOLR1), a GPI-anchored membrane protein that plays a major role in the uptake of folate/folic acid into cells via endocytosis, suggesting a possible involvement of this receptor in the mechanism of HALT-1-induced cell lysis. In vivo, does not cause visible paralysis in larvae of the blowfly Sarcophaga faculata, the most common arthropod prey of Hydra. This is Hydra actinoporin-like toxin 4 from Hydra vulgaris (Hydra).